The primary structure comprises 350 residues: Selenide, water dikinase (350 aa).

Cys-17 is a catalytic residue. ATP-binding positions include Lys-20 and 48–50 (LFD). Residue Asp-51 coordinates Mg(2+). Residues Asp-68, Asp-91, and 139–141 (GHS) each bind ATP. Position 91 (Asp-91) interacts with Mg(2+). Residue Asp-229 coordinates Mg(2+).

Belongs to the selenophosphate synthase 1 family. Class I subfamily. As to quaternary structure, homodimer. Mg(2+) serves as cofactor.

The enzyme catalyses hydrogenselenide + ATP + H2O = selenophosphate + AMP + phosphate + 2 H(+). Synthesizes selenophosphate from selenide and ATP. The chain is Selenide, water dikinase from Bdellovibrio bacteriovorus (strain ATCC 15356 / DSM 50701 / NCIMB 9529 / HD100).